We begin with the raw amino-acid sequence, 454 residues long: tRNA modification GTPase MnmE (454 aa).

The (6S)-5-formyl-5,6,7,8-tetrahydrofolate site is built by arginine 23, glutamate 80, and lysine 120. In terms of domain architecture, TrmE-type G spans 216–377 (GMKVVIAGRP…LRNHLKQSMG (162 aa)). Asparagine 226 contacts K(+). GTP contacts are provided by residues 226-231 (NAGKSS), 245-251 (TDIAGTT), 270-273 (DTAG), 335-338 (NKAD), and 358-360 (SAR). Serine 230 provides a ligand contact to Mg(2+). K(+) is bound by residues threonine 245, isoleucine 247, and threonine 250. Position 251 (threonine 251) interacts with Mg(2+). Lysine 454 lines the (6S)-5-formyl-5,6,7,8-tetrahydrofolate pocket.

This sequence belongs to the TRAFAC class TrmE-Era-EngA-EngB-Septin-like GTPase superfamily. TrmE GTPase family. As to quaternary structure, homodimer. Heterotetramer of two MnmE and two MnmG subunits. It depends on K(+) as a cofactor.

The protein localises to the cytoplasm. Exhibits a very high intrinsic GTPase hydrolysis rate. Involved in the addition of a carboxymethylaminomethyl (cmnm) group at the wobble position (U34) of certain tRNAs, forming tRNA-cmnm(5)s(2)U34. The polypeptide is tRNA modification GTPase MnmE (Shigella flexneri serotype 5b (strain 8401)).